Consider the following 131-residue polypeptide: Transcription antitermination protein NusB (131 aa).

The protein belongs to the NusB family.

Functionally, involved in transcription antitermination. Required for transcription of ribosomal RNA (rRNA) genes. Binds specifically to the boxA antiterminator sequence of the ribosomal RNA (rrn) operons. This Caldicellulosiruptor saccharolyticus (strain ATCC 43494 / DSM 8903 / Tp8T 6331) protein is Transcription antitermination protein NusB.